The sequence spans 1010 residues: MGDKGEKESPKKGKGKRDLDDLKKEVAMTEHKMSIEEVCRKYNTDCVQGLTHSKAQEILARDGPNALTPPPTTPEWVKFCRQLFGGFSILLWIGAILCFLAYGIQAGTEDEPSNDNLYLGIVLAAVVIITGCFSYYQEAKSSKIMESFKNMVPQQALVIREGEKMQLNAEEVVVGDLVEVKGGDRVPADLRIISAHGCKVDNSSLTGESEPQTRSPDCTHDNPLETRNITFFSTNCVEGTARGVVIATGDRTVMGRIATLASGLEVGKTPIAVEIEHFIQLITGVAVFLGISFFVLSLILGYTWLEAVIFLIGIIVANVPEGLLATVTVCLTLTAKRMARKNCLVKNLEAVETLGSTSTICSDKTGTLTQNRMTVAHMWFDNQIHEADTTEDQSGTSFDKSSATWVALSHIAGLCNRAVFKGGQENVPILKRDVAGDASESALLKCIELSSGSVKVMRERNKKVAEIPFNSTNKYQLSIHETEDPNDNRYLLVMKGAPERILDRCSTILLQGKEQPLDEEMKEAFQNAYLELGGLGERVLGFCHFYLPEEQYPKGFAFDCDDVNFATDNLCFVGLMSMIDPPRAAVPDAVGKCRSAGIKVIMVTGDHPITAKAIAKGVGIISEGNETVEDIAARLNIPVSQVNPRDAKACVIHGTDLKDMSSEQIDEILQNHTEIVFARTSPQQKLIIVEGCQRQGAIVAVTGDGVNDSPALKKADIGVAMGIRGSDVSKQAADMILLDDNFASIVTGVEEGRLIFDNLKKSIAYTLTSNIPEITPFLLFIMANIPLPLGTITILCIDLGTDMVPAISLAYEAAESDIMKRQPRNPRSDKLVNERLISMAYGQIGMIQALGGFFSYFVILAENGFLPSCLVGIRLSWDDRTINDLEDSYGQQWTYEQRKVVEFTCHTAFFVSIVVVQWADLIICKTRRNSVFQQGMKNKILIFGLFEETALAAFLSYCPGMDVALRMYPLKPSWWFCAFPYSFLIFVYDEIRKLILRRNPGGWVEKETYY.

The tract at residues 1 to 21 (MGDKGEKESPKKGKGKRDLDD) is disordered. Topologically, residues 1 to 74 (MGDKGEKESP…NALTPPPTTP (74 aa)) are cytoplasmic. An interaction with phosphoinositide-3 kinase region spans residues 69–71 (PPP). The chain crosses the membrane as a helical span at residues 75–95 (EWVKFCRQLFGGFSILLWIGA). Residues 96–118 (ILCFLAYGIQAGTEDEPSNDNLY) are Extracellular-facing. Residues 119–139 (LGIVLAAVVIITGCFSYYQEA) form a helical membrane-spanning segment. Over 140–275 (KSSKIMESFK…VGKTPIAVEI (136 aa)) the chain is Cytoplasmic. The chain crosses the membrane as a helical span at residues 276–295 (EHFIQLITGVAVFLGISFFV). Topologically, residues 296–307 (LSLILGYTWLEA) are extracellular. The helical transmembrane segment at 308-325 (VIFLIGIIVANVPEGLLA) threads the bilayer. Residues 326–759 (TVTVCLTLTA…EEGRLIFDNL (434 aa)) lie on the Cytoplasmic side of the membrane. Residue Asp363 is the 4-aspartylphosphate intermediate of the active site. Mg(2+) contacts are provided by Asp704 and Asp708. The helical transmembrane segment at 760 to 779 (KKSIAYTLTSNIPEITPFLL) threads the bilayer. The Extracellular portion of the chain corresponds to 780–789 (FIMANIPLPL). The helical transmembrane segment at 790-810 (GTITILCIDLGTDMVPAISLA) threads the bilayer. The Cytoplasmic segment spans residues 811–830 (YEAAESDIMKRQPRNPRSDK). A helical transmembrane segment spans residues 831–853 (LVNERLISMAYGQIGMIQALGGF). Residues 854–905 (FSYFVILAENGFLPSCLVGIRLSWDDRTINDLEDSYGQQWTYEQRKVVEFTC) lie on the Extracellular side of the membrane. A helical membrane pass occupies residues 906–925 (HTAFFVSIVVVQWADLIICK). Residues 926–938 (TRRNSVFQQGMKN) are Cytoplasmic-facing. Residue Ser930 is modified to Phosphoserine; by PKA. Residues 939–957 (KILIFGLFEETALAAFLSY) form a helical membrane-spanning segment. Residues 958 to 972 (CPGMDVALRMYPLKP) are Extracellular-facing. Residues 973–993 (SWWFCAFPYSFLIFVYDEIRK) traverse the membrane as a helical segment. Residues 994–1010 (LILRRNPGGWVEKETYY) lie on the Cytoplasmic side of the membrane.

Belongs to the cation transport ATPase (P-type) (TC 3.A.3) family. Type IIC subfamily. The sodium/potassium-transporting ATPase is composed of a catalytic alpha subunit, an auxiliary non-catalytic beta subunit and an additional regulatory subunit.

The protein resides in the cell membrane. It carries out the reaction K(+)(out) + Na(+)(in) + ATP + H2O = K(+)(in) + Na(+)(out) + ADP + phosphate + H(+). In terms of biological role, this is the catalytic component of the active enzyme, which catalyzes the hydrolysis of ATP coupled with the exchange of sodium and potassium ions across the plasma membrane. This action creates the electrochemical gradient of sodium and potassium ions, providing the energy for active transport of various nutrients. The sequence is that of Sodium/potassium-transporting ATPase subunit alpha-3 (ATP1A3) from Gallus gallus (Chicken).